Consider the following 1235-residue polypeptide: ATP-dependent helicase/nuclease subunit A (1235 aa).

In terms of domain architecture, UvrD-like helicase ATP-binding spans Arg4 to Met470. Residue Ala25–Thr32 coordinates ATP. In terms of domain architecture, UvrD-like helicase C-terminal spans Gln501–Gly795.

It belongs to the helicase family. AddA subfamily. As to quaternary structure, heterodimer of AddA and AddB/RexB. Mg(2+) is required as a cofactor.

It carries out the reaction Couples ATP hydrolysis with the unwinding of duplex DNA by translocating in the 3'-5' direction.. The enzyme catalyses ATP + H2O = ADP + phosphate + H(+). In terms of biological role, the heterodimer acts as both an ATP-dependent DNA helicase and an ATP-dependent, dual-direction single-stranded exonuclease. Recognizes the chi site generating a DNA molecule suitable for the initiation of homologous recombination. The AddA nuclease domain is required for chi fragment generation; this subunit has the helicase and 3' -&gt; 5' nuclease activities. In Pediococcus pentosaceus (strain ATCC 25745 / CCUG 21536 / LMG 10740 / 183-1w), this protein is ATP-dependent helicase/nuclease subunit A.